The chain runs to 784 residues: Cadherin-5 (784 aa).

The signal sequence occupies residues 1–24 (MQRLTELATALGAFLGLLAVAAMA). A propeptide spanning residues 25 to 45 (GPNFPQIDTPNMLPAHHRQKR) is cleaved from the precursor. 5 consecutive Cadherin domains span residues 46–149 (DWIW…WPVF), 150–256 (SHQV…FPVF), 257–371 (TQST…PPVF), 372–476 (QRHF…DNPP), and 477–593 (EFAQ…MAAQ). Residues 46-599 (DWIWNQMHID…MAAQAGVSIQ (554 aa)) lie on the Extracellular side of the membrane. 2 residues coordinate Ca(2+): Glu56 and Glu57. N-linked (GlcNAc...) asparagine glycosylation is present at Asn59. Ca(2+) is bound by residues Asp107, Glu109, Asp141, Ile142, Asn143, Asp144, and Asn145. N-linked (GlcNAc...) asparagine glycosylation occurs at Asn155. Ca(2+) contacts are provided by Asp175, Asp177, His184, and Asp229. Asn441, Asn523, and Asn535 each carry an N-linked (GlcNAc...) asparagine glycan. Residues 600–620 (ALVAIFLCILTITVITLLIIL) traverse the membrane as a helical segment. Residues 621 to 660 (RRRIRKQAHAHSKSALEIHEQLVTYDEEGGGEMDTTSYDV) form a required for interaction with PALS1 region. Residues 621 to 784 (RRRIRKQAHA…GSDPQEELII (164 aa)) lie on the Cytoplasmic side of the membrane.

Part of a complex composed of AMOTL2, MAGI1 and CDH5, within the complex AMOTL2 acts as a scaffold protein for the interaction of MAGI1 with CDH5. The complex is required for coupling actin fibers to cell junctions in endothelial cells. Within the complex AMOTL2 (via its N-terminus) interacts with CDH5. Interacts (via cadherin 5 domain) with PTPRB. Interacts with TRPC4. Interacts with KRIT1. Interacts with PARD3. Interacts with RTN4 (isoform B). Interacts with PALS1; the interaction promotes PALS1 localization to cell junctions and is required for CDH5-mediated vascular lumen formation and endothelial cell polarity. Interacts with CTNND1/p120-catenin; the interaction controls CADH5 endocytosis. In terms of processing, phosphorylated on tyrosine residues by KDR/VEGFR-2. Dephosphorylated by PTPRB. Post-translationally, O-glycosylated. As to expression, expressed in postnatal endothelial cells of the retinal vascular plexus (at protein level).

The protein resides in the cell junction. It localises to the adherens junction. The protein localises to the cell membrane. It is found in the cytoplasm. Functionally, cadherins are calcium-dependent cell adhesion proteins. They preferentially interact with themselves in a homophilic manner in connecting cells; cadherins may thus contribute to the sorting of heterogeneous cell types. This cadherin may play an important role in endothelial cell biology through control of the cohesion and organization of the intercellular junctions. It associates with alpha-catenin forming a link to the cytoskeleton. Plays a role in coupling actin fibers to cell junctions in endothelial cells, via acting as a cell junctional complex anchor for AMOTL2 and MAGI1. Acts in concert with KRIT1 and PALS1 to establish and maintain correct endothelial cell polarity and vascular lumen. These effects are mediated by recruitment and activation of the Par polarity complex and RAP1B. Required for activation of PRKCZ and for localization of phosphorylated PRKCZ, PARD3, TIAM1 and RAP1B to the cell junction. Associates with CTNND1/p120-catenin to control CADH5 endocytosis. The sequence is that of Cadherin-5 from Mus musculus (Mouse).